Here is a 640-residue protein sequence, read N- to C-terminus: Biosynthetic arginine decarboxylase (640 aa).

Lys-109 bears the N6-(pyridoxal phosphate)lysine mark. 291–301 serves as a coordination point for substrate; that stretch reads LDVGGGLGVDY.

This sequence belongs to the Orn/Lys/Arg decarboxylase class-II family. SpeA subfamily. Mg(2+) serves as cofactor. The cofactor is pyridoxal 5'-phosphate.

The catalysed reaction is L-arginine + H(+) = agmatine + CO2. It functions in the pathway amine and polyamine biosynthesis; agmatine biosynthesis; agmatine from L-arginine: step 1/1. Catalyzes the biosynthesis of agmatine from arginine. The protein is Biosynthetic arginine decarboxylase of Synechococcus sp. (strain RCC307).